A 649-amino-acid chain; its full sequence is 70 kDa protein (649 aa).

Disordered regions lie at residues 28 to 80 (LRRG…DFSP), 257 to 286 (ALSL…AASD), 311 to 359 (TATS…SKQQ), and 458 to 550 (QSAE…PSSL). The segment covering 268–279 (KSTSPCNNSQLP) has biased composition (polar residues). Over residues 330-349 (RLQRSLHLHSRSPHSSHFRP) the composition is skewed to basic residues. Positions 504 to 515 (DVSNSETKNCPS) are enriched in polar residues. Low complexity-rich tracts occupy residues 524-533 (PNHLHPLLPG) and 540-550 (PRQLSPSPSSL).

It belongs to the tymoviridae protein p69 family.

In Solanum lycopersicum (Tomato), this protein is 70 kDa protein.